The following is a 155-amino-acid chain: Small ribosomal subunit protein uS7 (155 aa).

This sequence belongs to the universal ribosomal protein uS7 family. In terms of assembly, part of the 30S ribosomal subunit. Contacts proteins S9 and S11.

Functionally, one of the primary rRNA binding proteins, it binds directly to 16S rRNA where it nucleates assembly of the head domain of the 30S subunit. Is located at the subunit interface close to the decoding center, probably blocks exit of the E-site tRNA. The protein is Small ribosomal subunit protein uS7 of Corynebacterium glutamicum (strain R).